The primary structure comprises 1218 residues: Coatomer subunit alpha-2 (1218 aa).

WD repeat units lie at residues 7-48 (TKSN…DRFD), 49-88 (EHEG…CLFT), 91-132 (GHLD…SVLT), 133-172 (GHNH…KKSA), 202-241 (GHDR…AWEV), 246-285 (GHMN…GIQT), 288-326 (REHD…PAFA), and 363-404 (SLNQ…VGRS). The segment at 826-849 (NRGAVDEEEEDVEGDWGEGLDKFD) is disordered. Residues 831 to 843 (DEEEEDVEGDWGE) are compositionally biased toward acidic residues.

In terms of assembly, oligomeric complex that consists of at least the alpha, beta, beta', gamma, delta, epsilon and zeta subunits.

It is found in the cytoplasm. Its subcellular location is the golgi apparatus membrane. The protein resides in the cytoplasmic vesicle. The protein localises to the COPI-coated vesicle membrane. Functionally, the coatomer is a cytosolic protein complex that binds to dilysine motifs and reversibly associates with Golgi non-clathrin-coated vesicles, which further mediate biosynthetic protein transport from the ER, via the Golgi up to the trans Golgi network. Coatomer complex is required for budding from Golgi membranes, and is essential for the retrograde Golgi-to-ER transport of dilysine-tagged proteins. In Arabidopsis thaliana (Mouse-ear cress), this protein is Coatomer subunit alpha-2.